Consider the following 193-residue polypeptide: MKDYSHLHIGVLALQGAVSEHLRQIEQLGANASAIKTVSELTALDGLVLPGGESTTIGRLMRQYGFIEAIQDVAKQGKGIFGTCAGMILLAKQLENDPTVHLGLMDICVQRNAFGRQVDSFQTALEIEGFATTFPAVFIRAPHIAQVNHEKVQCLATFQGHVVLAKQQNLLACAFHPELTTDLRVMQHFLEMC.

52–54 (GES) is an L-glutamine binding site. The active-site Nucleophile is Cys-84. L-glutamine contacts are provided by residues Arg-111 and 139–140 (IR). Residues His-176 and Glu-178 each act as charge relay system in the active site.

It belongs to the glutaminase PdxT/SNO family. As to quaternary structure, in the presence of PdxS, forms a dodecamer of heterodimers. Only shows activity in the heterodimer.

It carries out the reaction aldehydo-D-ribose 5-phosphate + D-glyceraldehyde 3-phosphate + L-glutamine = pyridoxal 5'-phosphate + L-glutamate + phosphate + 3 H2O + H(+). The enzyme catalyses L-glutamine + H2O = L-glutamate + NH4(+). It functions in the pathway cofactor biosynthesis; pyridoxal 5'-phosphate biosynthesis. Functionally, catalyzes the hydrolysis of glutamine to glutamate and ammonia as part of the biosynthesis of pyridoxal 5'-phosphate. The resulting ammonia molecule is channeled to the active site of PdxS. The sequence is that of Pyridoxal 5'-phosphate synthase subunit PdxT from Pasteurella multocida (strain Pm70).